A 490-amino-acid chain; its full sequence is Cytochrome P450 2C14 (490 aa).

Cys435 is a heme binding site.

Belongs to the cytochrome P450 family. It depends on heme as a cofactor.

It localises to the endoplasmic reticulum membrane. The protein localises to the microsome membrane. The enzyme catalyses an organic molecule + reduced [NADPH--hemoprotein reductase] + O2 = an alcohol + oxidized [NADPH--hemoprotein reductase] + H2O + H(+). Its function is as follows. Cytochromes P450 are a group of heme-thiolate monooxygenases. In liver microsomes, this enzyme is involved in an NADPH-dependent electron transport pathway. It oxidizes a variety of structurally unrelated compounds, including steroids, fatty acids, and xenobiotics. This Oryctolagus cuniculus (Rabbit) protein is Cytochrome P450 2C14 (CYP2C14).